The sequence spans 482 residues: Spore germination protein A1 (482 aa).

The next 6 helical transmembrane spans lie at 242 to 262, 284 to 304, 321 to 341, 351 to 371, 373 to 393, and 406 to 426; these read VAIL…LGIL, FASI…VSFH, ENVP…IELL, PLGQ…AVEA, LVSS…FTVP, and FISM…FMLV.

This sequence belongs to the GerABKA family.

The protein resides in the cell membrane. In terms of biological role, forms a complex at the inner spore membrane which acts as a receptor for L-alanine, thus is involved in the stimulation of germination in response to alanine. Can stimulate germination in the absence of GerD and GerK gene products (fructose and glucose receptors, respectively), but the response is improved in their presence. In Bacillus subtilis (strain 168), this protein is Spore germination protein A1 (gerAA).